Reading from the N-terminus, the 253-residue chain is Ribosomal RNA small subunit methyltransferase G (253 aa).

Residues G84, L89, 136 to 137 (IE), and R155 contribute to the S-adenosyl-L-methionine site.

This sequence belongs to the methyltransferase superfamily. RNA methyltransferase RsmG family.

It localises to the cytoplasm. Specifically methylates the N7 position of a guanine in 16S rRNA. This is Ribosomal RNA small subunit methyltransferase G from Prochlorococcus marinus (strain SARG / CCMP1375 / SS120).